The primary structure comprises 311 residues: Insulin-like growth factor-binding protein 2 (311 aa).

An N-terminal signal peptide occupies residues 1 to 36; the sequence is MALGGVGRGGAARAAWPRLLLAALAPALALAGPALP. One can recognise an IGFBP N-terminal domain in the interval 38–120; the sequence is VLFRCPPCTA…VQGQGTCARP (83 aa). Cystine bridges form between C42–C70, C45–C72, C53–C73, C61–C76, C84–C97, and C91–C117. Disordered stretches follow at residues 112-168 and 188-210; these read QGQG…PLKT and GKVGKAHHNHEDSKKSRMPTGRT. A Thyroglobulin type-1 domain is found at 209 to 291; that stretch reads RTPCQQELDQ…APTIRGDPEC (83 aa). 3 disulfides stabilise this stretch: C212–C246, C257–C268, and C270–C291. Positions 286 to 288 match the Cell attachment site motif; the sequence is RGD.

Binds IGF2 more than IGF1.

It is found in the secreted. Its function is as follows. Inhibits IGF-mediated growth and developmental rates. IGF-binding proteins prolong the half-life of the IGFs and have been shown to either inhibit or stimulate the growth promoting effects of the IGFs on cell culture. They alter the interaction of IGFs with their cell surface receptors. The chain is Insulin-like growth factor-binding protein 2 (IGFBP2) from Gallus gallus (Chicken).